The chain runs to 473 residues: Uronate isomerase (473 aa).

This sequence belongs to the metallo-dependent hydrolases superfamily. Uronate isomerase family.

The catalysed reaction is D-glucuronate = D-fructuronate. It catalyses the reaction aldehydo-D-galacturonate = keto-D-tagaturonate. It functions in the pathway carbohydrate metabolism; pentose and glucuronate interconversion. The sequence is that of Uronate isomerase from Bacillus licheniformis (strain ATCC 14580 / DSM 13 / JCM 2505 / CCUG 7422 / NBRC 12200 / NCIMB 9375 / NCTC 10341 / NRRL NRS-1264 / Gibson 46).